The primary structure comprises 720 residues: MPRDYQTEKEKCKTFLQEFYKDDEIGKKHFKYGVQLANIAHREQVALYIDLDDLAEEDPELVDAICENTRRYTNLFADAVQELLPQYKEREVVHKDALDVYIEHRLMMEQRGRDPNEMRDSQNQYPPELMRRFELYFKAPSSSKARVVRDVKADSIGKLVNIRGIVTRVTEVKPMMVVATYTCDQCGAETYQPIQSPTFMPLIMCPSRECQTNRSGGRLYLQTRGSKFIKFQELKIQEHSDQVPVGNIPRCMSVYVRGENTRLAQPGDHVGITGVFLPMLRTGFRQVVQGLLSETYLECHRLVKMNKSEDDELGTEELSEEELRQITEEDFYEKLAASIAPEIYGHEDVKKALLLLLVGGVDNSPRGMKIRGNINICLMGDPGVAKSQLLSYIDRLAPRSQYTTGRGSSGVGLTAAVMKDPVTGEMTLEGGALVLADQGVCCIDEFDKMMDTDRTAIHEVMEQQTISIAKAGIMTTLNARCSILAAANPAYGRYNPKKTVEQNIQLPAALLSRFDVLWLIQDKPDRDNDLRLAQHITYVHQHSKQPPSQFQPLDMKLMRRYITMCKRKQPAIPEALADYLTAAYVEMRKEARTNKDMTFTSARTLLSVLRLSTALARLRLEDVVEKEDVNEAMRLMEMSKDSLLGDKGHTSRTQRPADVIFSTIREMVPEKGARSVKYSEAEQRCVSKGFTPAQFEAALEEYEELNVWLVNQARTKITFV.

A C4-type zinc finger spans residues Cys183–Cys210. An MCM domain is found at Phe331–Thr537. Residues Tyr344, Gly383, Ala385, Lys386, Ser387, Asn488, Arg513, and Arg603 each contribute to the ATP site. Positions Ser512–Asp515 match the Arginine finger motif.

Belongs to the MCM family. In terms of assembly, component of the mcm2-7 complex (RLF-M). The complex forms a toroidal hexameric ring with the proposed subunit order mcm2-mcm6-mcm4-mcm7-mcm3-mcm5. The heterodimer of mmcm3/mcm5 interacts with mcm4, mmcm6, mcm7 and weakly with mcm2. The N-terminus is required for interaction with mmcm3, though this interaction may not be direct, and remains in a complex with mmcm3 throughout the cell cycle. Begins to associate with zmcm6 at the neurula stage. Component of the replisome complex. Component of the CMG helicase complex, composed of the mcm2-7 complex, the GINS complex and cdc45. Ubiquitinated by traip when forks converge following formation of DNA interstrand cross-links. Ubiquitinated via 'Lys-6'- and 'Lys-63'-linked polyubiquitination by traip. Short ubiquitin chains on mcm7 promote recruitment of DNA glycosylase neil3. If the interstrand cross-link cannot be cleaved by neil3, the ubiquitin chains continue to grow on mcm7, promoting the unloading of the CMG helicase complex by the vcp/p97 ATPase.

It localises to the nucleus. It is found in the chromosome. It catalyses the reaction ATP + H2O = ADP + phosphate + H(+). Its function is as follows. Acts as a component of the mcm2-7 complex (mcm complex) which is the putative replicative helicase essential for 'once per cell cycle' DNA replication initiation and elongation in eukaryotic cells. The active ATPase sites in the mcm2-7 ring are formed through the interaction surfaces of two neighboring subunits such that a critical structure of a conserved arginine finger motif is provided in trans relative to the ATP-binding site of the Walker A box of the adjacent subunit. The six ATPase active sites, however, are likely to contribute differentially to the complex helicase activity. The existence of maternal and zygotic forms of mcm3 and mcm6 suggests that specific forms of mcm2-7 complexes may be used during different stages of development. This is DNA replication licensing factor mcm7-A (mcm7-a) from Xenopus laevis (African clawed frog).